A 137-amino-acid chain; its full sequence is Nucleoside diphosphate kinase (137 aa).

ATP-binding residues include K9, F58, R86, T92, R103, and N113. H121 functions as the Pros-phosphohistidine intermediate in the catalytic mechanism.

Belongs to the NDK family. In terms of assembly, homotetramer. It depends on Mg(2+) as a cofactor.

The protein resides in the cytoplasm. It catalyses the reaction a 2'-deoxyribonucleoside 5'-diphosphate + ATP = a 2'-deoxyribonucleoside 5'-triphosphate + ADP. It carries out the reaction a ribonucleoside 5'-diphosphate + ATP = a ribonucleoside 5'-triphosphate + ADP. Major role in the synthesis of nucleoside triphosphates other than ATP. The ATP gamma phosphate is transferred to the NDP beta phosphate via a ping-pong mechanism, using a phosphorylated active-site intermediate. This is Nucleoside diphosphate kinase from Streptococcus pneumoniae (strain P1031).